Consider the following 725-residue polypeptide: Ferric reduction oxidase 2 (725 aa).

Residues 1 to 28 lie on the Cytoplasmic side of the membrane; it reads MEIEKSNNGGSNPSAGEEFKDMIKGVTK. Residues 29–48 form a helical membrane-spanning segment; sequence FLMMVIFLGTIMLWIMMPTL. Residues 49 to 74 lie on the Extracellular side of the membrane; that stretch reads TYRTKWLPHLRIKFGTSTYFGATGTT. Residues 75–93 traverse the membrane as a helical segment; that stretch reads LFMYMFPMMVVACLGCVYL. At 94–125 the chain is on the cytoplasmic side; the sequence is HFKNRKSPHHIDRETKGGVWSKLRKPMLVKGP. Residues 126–149 traverse the membrane as a helical segment; sequence LGIVSVTEITFLAMFVALLLWCFI. The Extracellular portion of the chain corresponds to 150 to 217; sequence TYLRNSFATI…MGLTSESSIK (68 aa). The Ferric oxidoreductase domain occupies 183–303; the sequence is LGLIGNICLA…YLYIVFMLFF (121 aa). A helical transmembrane segment spans residues 218 to 241; sequence YHIWLGHMVMALFTVHGLCYIIYW. His219 and His233 together coordinate heme. At 242 to 291 the chain is on the cytoplasmic side; the sequence is ASMHEISQMIMWDTKGVSNLAGEIALAAGLVMWATTYPKIRRRFFEVFFY. A helical membrane pass occupies residues 292-316; that stretch reads THYLYIVFMLFFVLHVGISFSFIAL. Heme is bound by residues His293 and His306. Over 317-338 the chain is Extracellular; the sequence is PGFYIFLVDRFLRFLQSRENVR. Residues 332 to 437 form the FAD-binding FR-type domain; that stretch reads QSRENVRLLA…EGPYGPASAD (106 aa). A helical membrane pass occupies residues 339–359; that stretch reads LLAARILPSDTMELTFSKNSK. Topologically, residues 360-554 are cytoplasmic; it reads LVYSPTSIMF…SISSILGPNS (195 aa). Residue 381-384 participates in FAD binding; it reads HPFT. Residue 429-432 coordinates NAD(+); that stretch reads GPYG. Residues 555–577 traverse the membrane as a helical segment; sequence WLWLGAILASSFLIFMIIIGIIT. Over 578–597 the chain is Extracellular; that stretch reads RYYIYPIDHNTNKIYSLTSK. The chain crosses the membrane as a helical span at residues 598 to 619; it reads TIIYILVISVSIMATCSAAMLW. Residues 620–725 lie on the Cytoplasmic side of the membrane; that stretch reads NKKKYGKVES…LHFESISFSW (106 aa).

Belongs to the ferric reductase (FRE) family. FAD serves as cofactor. As to expression, expressed in the epidermal cells of the roots. High expression in lateral roots and root hairs. Detected in leaves, stems, siliques and in flowers in anthers and styles.

The protein localises to the cell membrane. It catalyses the reaction 2 a Fe(II)-siderophore + NAD(+) + H(+) = 2 a Fe(III)-siderophore + NADH. Flavocytochrome that transfers electrons across the plasma membrane to reduce ferric iron chelates to form soluble ferrous iron in the rhizosphere. May be involved in the delivery of iron to developing pollen grains. Also acts as a copper-chelate reductase. Involved in glycine betaine-mediated chilling tolerance and reactive oxygen species accumulation. The polypeptide is Ferric reduction oxidase 2 (FRO2) (Arabidopsis thaliana (Mouse-ear cress)).